The chain runs to 98 residues: Gas vesicle protein A (98 aa).

Belongs to the gas vesicle GvpA family. The gas vesicle shell is 2 nm thick and consists of a single layer of this protein. It forms helical ribs nearly perpendicular to the long axis of the vesicle.

Its subcellular location is the gas vesicle shell. Its function is as follows. Gas vesicles are hollow, gas filled proteinaceous nanostructures found in some microorganisms. During planktonic growth they allow positioning of the organism at a favorable depth for light or nutrient acquisition. GvpA forms the protein shell. The chain is Gas vesicle protein A from Koribacter versatilis (strain Ellin345).